The chain runs to 559 residues: Phenylalanine--tRNA ligase beta subunit (559 aa).

The B5 domain maps to 274 to 350 (FEPKIIDVHT…LGYGFNELPA (77 aa)). Mg(2+)-binding residues include Asp328, Asp334, Glu337, and Asn338.

The protein belongs to the phenylalanyl-tRNA synthetase beta subunit family. Type 2 subfamily. In terms of assembly, tetramer of two alpha and two beta subunits. The cofactor is Mg(2+).

Its subcellular location is the cytoplasm. The catalysed reaction is tRNA(Phe) + L-phenylalanine + ATP = L-phenylalanyl-tRNA(Phe) + AMP + diphosphate + H(+). This chain is Phenylalanine--tRNA ligase beta subunit, found in Methanosphaera stadtmanae (strain ATCC 43021 / DSM 3091 / JCM 11832 / MCB-3).